The chain runs to 478 residues: MSATINPVVDNSVFTDCKVADLSLADWGRKEIAIAETEMPGLMALREQYADKKPLAGARIAGSLHMTIQTAVLIETLVALGAEVRWASCNIFSTQDHAAAAIAARNIPVFAYKGESLEEYWDYAHQIFEWASDGSHTANMILDDGGDATLLLILGSKAERDPSVIANPTNEEEQVLFASIRSRLASHPGWYSRNLAAIRGVTEETTTGVHRLYEMEKKGELPFPAINVNDSVTKSKFDNLYGCRESLVDGIKRATDVMIAGKIAVVCGYGDVGKGCAQSLRGLGATVWITEIDPICALQAAMEGYRVVTMDDACDKADIFVTATGNLRVITHDHMLKMKDQSIICNIGHFDSEIDIASVQKYQWENIKPQVDHVIFPTGRRIIVLAQGRLVNLGCATGHPSFVMSSSFTNQVLAQIELWQNGKDYQKKVYVLPKRLDEMVARLHLGKLGVKLTELTDEQAHYLNLDKNGPYKPEMYRY.

Thr-67, Asp-144, and Glu-204 together coordinate substrate. 205–207 serves as a coordination point for NAD(+); it reads TTT. Residues Lys-234 and Asp-238 each contribute to the substrate site. NAD(+) contacts are provided by residues Asn-239, 268–273, Glu-291, Asn-326, 347–349, and Asn-392; these read GYGDVG and IGH.

This sequence belongs to the adenosylhomocysteinase family. Requires NAD(+) as cofactor.

The protein localises to the cytoplasm. The enzyme catalyses S-adenosyl-L-homocysteine + H2O = L-homocysteine + adenosine. It functions in the pathway amino-acid biosynthesis; L-homocysteine biosynthesis; L-homocysteine from S-adenosyl-L-homocysteine: step 1/1. Its function is as follows. May play a key role in the regulation of the intracellular concentration of adenosylhomocysteine. This chain is Adenosylhomocysteinase, found in Nitrosomonas europaea (strain ATCC 19718 / CIP 103999 / KCTC 2705 / NBRC 14298).